Reading from the N-terminus, the 478-residue chain is Crt homolog 3 (478 aa).

The disordered stretch occupies residues 1 to 30 (MGSDERKPLLSINDGDDDFNHQDVSTKTPP). Over 1-52 (MGSDERKPLLSINDGDDDFNHQDVSTKTPPIKKESLSNKFKSFLKKSMTKET) the chain is Cytoplasmic. A helical membrane pass occupies residues 53-73 (LPILIYVLLYIISGVINVVLL). At 74–83 (KKLMIKFVNY) the chain is on the vacuolar side. Residues 84 to 104 (GFFLSQITNYGYLPIFLVAMW) traverse the membrane as a helical segment. Residues 105–124 (YKMYCTSDVPKETRNFPQYK) are Cytoplasmic-facing. Residues 125–145 (FVIMGLLDAINGFFVVIGGVS) form a helical membrane-spanning segment. Topologically, residues 146-149 (TSGP) are vacuolar. A helical membrane pass occupies residues 150–170 (LQQLLNQAIIPFTMIASFIFL). The Cytoplasmic portion of the chain corresponds to 171 to 178 (RERYSLFQ). The chain crosses the membrane as a helical span at residues 179–199 (LGGAAVILGGVIVSLIPSLVG). At 200 to 205 (GSSGGN) the chain is on the vacuolar side. A helical transmembrane segment spans residues 206 to 226 (ILFYNFFYLISVIPGALSNVY). Residues 227–237 (KDIAFQSIDMD) lie on the Cytoplasmic side of the membrane. The chain crosses the membrane as a helical span at residues 238-258 (VWYLQFWDCLYQSLFGSILFP). The Vacuolar segment spans residues 259 to 322 (VNNWLPPPAT…FVCDDCHNTW (64 aa)). N-linked (GlcNAc...) asparagine glycosylation is present at asparagine 296. Residues 323-343 (IIVLIYMTVNIAYNIFILLVL) traverse the membrane as a helical segment. Topologically, residues 344–352 (KHAGATVYS) are cytoplasmic. The chain crosses the membrane as a helical span at residues 353-373 (IANTVILPLTNIFFSIHFIMG). Residues 374–376 (AAT) lie on the Vacuolar side of the membrane. Residues 377–397 (TPFSALSVAGLLLILFGLGGY) form a helical membrane-spanning segment. Residues 398–478 (RIGSMIKKPP…RYRATNIINN (81 aa)) are Cytoplasmic-facing. The disordered stretch occupies residues 404 to 446 (KKPPPDSKKDSEQQGGEGGAGDGDSSDNKNNLGDSAEIPQQIQ). Positions 406 to 415 (PPPDSKKDSE) are enriched in basic and acidic residues.

It belongs to the CRT-like transporter family.

It is found in the vacuole membrane. Its function is as follows. Nutrient transporter. Involved in maintaining the osmotic homeostasis of the digestive vacuole. The chain is Crt homolog 3 (crtp3) from Dictyostelium discoideum (Social amoeba).